A 63-amino-acid chain; its full sequence is DNA-directed RNA polymerase 7 kDa subunit (63 aa).

It belongs to the poxviridae DNA-directed RNA polymerase 7 kDa subunit family. In terms of assembly, the DNA-dependent RNA polymerase used for intermediate and late genes expression consists of eight subunits 147 kDa, 133 kDa, 35 kDa, 30 kDa, 22 kDa, 19 kDa, 18 kDa and 7 kDa totalling more than 500 kDa in mass. The same holoenzyme, with the addition of the transcription-specificity factor RAP94, is used for early gene expression.

It is found in the virion. The enzyme catalyses RNA(n) + a ribonucleoside 5'-triphosphate = RNA(n+1) + diphosphate. Functionally, part of the DNA-dependent RNA polymerase which catalyzes the transcription of viral DNA into RNA using the four ribonucleoside triphosphates as substrates. Responsible for the transcription of early, intermediate and late genes. DNA-dependent RNA polymerase associates with the early transcription factor (ETF) thereby allowing the early genes transcription. Late transcription, and probably also intermediate transcription, require newly synthesized RNA polymerase. This Myxoma virus (strain Lausanne) (MYXV) protein is DNA-directed RNA polymerase 7 kDa subunit (RPO7).